The following is a 127-amino-acid chain: Small ribosomal subunit protein uS13 (127 aa).

The tract at residues 97–127 is disordered; the sequence is PVRGQRTRTNARTRRGGRKTVAGKKKAAAKK. The span at 101–127 shows a compositional bias: basic residues; sequence QRTRTNARTRRGGRKTVAGKKKAAAKK.

It belongs to the universal ribosomal protein uS13 family. In terms of assembly, part of the 30S ribosomal subunit. Forms a loose heterodimer with protein S19. Forms two bridges to the 50S subunit in the 70S ribosome.

Located at the top of the head of the 30S subunit, it contacts several helices of the 16S rRNA. In the 70S ribosome it contacts the 23S rRNA (bridge B1a) and protein L5 of the 50S subunit (bridge B1b), connecting the 2 subunits; these bridges are implicated in subunit movement. Contacts the tRNAs in the A and P-sites. This Gloeobacter violaceus (strain ATCC 29082 / PCC 7421) protein is Small ribosomal subunit protein uS13.